Consider the following 182-residue polypeptide: Fimbrial subunit type 1 (182 aa).

The first 23 residues, 1 to 23, serve as a signal peptide directing secretion; it reads MKIKTLAIVVLSALSLSSAAALA. An intrachain disulfide couples Cys44 to Cys84.

This sequence belongs to the fimbrial protein family.

The protein resides in the fimbrium. This is Fimbrial subunit type 1 from Klebsiella pneumoniae.